We begin with the raw amino-acid sequence, 76 residues long: uncharacterized protein (76 aa).

2 EF-hand domains span residues 9–44 (EMDEEAEEAFDLFDVTHKGYIDFEDLRRSCAQLGEN) and 43–76 (ENLTKEQLQLMLDLAGTNGKVSREEFAELWIHIS).

It is found in the cytoplasm. The protein localises to the nucleus. This is an uncharacterized protein from Schizosaccharomyces pombe (strain 972 / ATCC 24843) (Fission yeast).